We begin with the raw amino-acid sequence, 280 residues long: MRINGETKLTGIIGYPLKHTLSPQMHNEAFKALNLNFLYLPLEVAEESLPQAIYGLKAFNFRGINVTIPYKEKVFPFLDEVATEAKTIGAVNTIVHDRGRLIGYNTDAPGFLLSLKENDVEVTGKKVLLLGAGGAARAVAYALLTAGAELIIANRTIDKAKELAKDFQGVGKISEILELGDKPISLAPYHMAVNTLPLGMHPYENQMPAVDFTGVTSDFVAYDLIYNPAETKFLKASKEKGARTINGLSMLLWQGVLAFEKWTGVSPPVKVMKKAIGLSC.

Shikimate-binding positions include 20 to 22 (TLS) and Thr-67. The active-site Proton acceptor is the Lys-71. Asn-92 and Asp-107 together coordinate shikimate. NADP(+) contacts are provided by residues 131-135 (GAGGA), 154-159 (NRTIDK), and Leu-224. Tyr-226 lines the shikimate pocket. Gly-247 provides a ligand contact to NADP(+).

This sequence belongs to the shikimate dehydrogenase family. Homodimer.

The catalysed reaction is shikimate + NADP(+) = 3-dehydroshikimate + NADPH + H(+). Its pathway is metabolic intermediate biosynthesis; chorismate biosynthesis; chorismate from D-erythrose 4-phosphate and phosphoenolpyruvate: step 4/7. Its function is as follows. Involved in the biosynthesis of the chorismate, which leads to the biosynthesis of aromatic amino acids. Catalyzes the reversible NADPH linked reduction of 3-dehydroshikimate (DHSA) to yield shikimate (SA). In Carboxydothermus hydrogenoformans (strain ATCC BAA-161 / DSM 6008 / Z-2901), this protein is Shikimate dehydrogenase (NADP(+)).